Here is a 115-residue protein sequence, read N- to C-terminus: Large ribosomal subunit protein bL19 (115 aa).

Belongs to the bacterial ribosomal protein bL19 family.

Its function is as follows. This protein is located at the 30S-50S ribosomal subunit interface and may play a role in the structure and function of the aminoacyl-tRNA binding site. In Akkermansia muciniphila (strain ATCC BAA-835 / DSM 22959 / JCM 33894 / BCRC 81048 / CCUG 64013 / CIP 107961 / Muc), this protein is Large ribosomal subunit protein bL19.